The chain runs to 571 residues: Proline--tRNA ligase (571 aa).

The protein belongs to the class-II aminoacyl-tRNA synthetase family. ProS type 1 subfamily. In terms of assembly, homodimer.

Its subcellular location is the cytoplasm. The enzyme catalyses tRNA(Pro) + L-proline + ATP = L-prolyl-tRNA(Pro) + AMP + diphosphate. In terms of biological role, catalyzes the attachment of proline to tRNA(Pro) in a two-step reaction: proline is first activated by ATP to form Pro-AMP and then transferred to the acceptor end of tRNA(Pro). As ProRS can inadvertently accommodate and process non-cognate amino acids such as alanine and cysteine, to avoid such errors it has two additional distinct editing activities against alanine. One activity is designated as 'pretransfer' editing and involves the tRNA(Pro)-independent hydrolysis of activated Ala-AMP. The other activity is designated 'posttransfer' editing and involves deacylation of mischarged Ala-tRNA(Pro). The misacylated Cys-tRNA(Pro) is not edited by ProRS. The sequence is that of Proline--tRNA ligase from Aliivibrio salmonicida (strain LFI1238) (Vibrio salmonicida (strain LFI1238)).